The chain runs to 339 residues: Adenosine deaminase (339 aa).

Positions 15 and 17 each coordinate Zn(2+). The substrate site is built by H17, D19, and G172. A Zn(2+)-binding site is contributed by H199. Catalysis depends on E202, which acts as the Proton donor. D279 is a binding site for Zn(2+).

This sequence belongs to the metallo-dependent hydrolases superfamily. Adenosine and AMP deaminases family. Adenosine deaminase subfamily. The cofactor is Zn(2+).

It carries out the reaction adenosine + H2O + H(+) = inosine + NH4(+). The enzyme catalyses 2'-deoxyadenosine + H2O + H(+) = 2'-deoxyinosine + NH4(+). Functionally, catalyzes the hydrolytic deamination of adenosine and 2-deoxyadenosine. The chain is Adenosine deaminase from Lacticaseibacillus casei (strain BL23) (Lactobacillus casei).